The following is a 196-amino-acid chain: GTP cyclohydrolase 1 (196 aa).

The Zn(2+) site is built by C86, H89, and C158.

Belongs to the GTP cyclohydrolase I family. Homomer.

The catalysed reaction is GTP + H2O = 7,8-dihydroneopterin 3'-triphosphate + formate + H(+). It participates in cofactor biosynthesis; 7,8-dihydroneopterin triphosphate biosynthesis; 7,8-dihydroneopterin triphosphate from GTP: step 1/1. This is GTP cyclohydrolase 1 from Clostridium botulinum (strain Loch Maree / Type A3).